Here is a 163-residue protein sequence, read N- to C-terminus: Phospholipase A2 homolog 3 (163 aa).

A signal peptide spans 1–43 (MARGGSFSRLRLRAGVVVAAAAAALLLFAVVAPPAAALNIGLQ). Disulfide bonds link C55–C83, C59–C89, C64–C137, C76–C96, C95–C121, and C102–C114. Residues Y75, G77, and Y80 each coordinate Ca(2+). H99 is an active-site residue. D100 lines the Ca(2+) pocket.

The protein belongs to the phospholipase A2 family. Ca(2+) serves as cofactor.

The protein resides in the secreted. The enzyme catalyses a 1,2-diacyl-sn-glycero-3-phosphocholine + H2O = a 1-acyl-sn-glycero-3-phosphocholine + a fatty acid + H(+). Its activity is regulated as follows. Inhibited by EGTA. Functionally, PA2 catalyzes the calcium-dependent hydrolysis of the 2-acyl groups in 3-sn-phosphoglycerides. Releases lysophospholipids (LPLs) and free fatty acids (FFAs) from membrane phospholipids in response to hormones and other external stimuli. The chain is Phospholipase A2 homolog 3 (PLA2-III) from Oryza sativa subsp. japonica (Rice).